We begin with the raw amino-acid sequence, 86 residues long: Neurotoxin LmNaTx1 (86 aa).

An N-terminal signal peptide occupies residues 1–18; that stretch reads MKILIIFVIAITVVGVQS. Residues 19–85 form the LCN-type CS-alpha/beta domain; it reads KDGYPIYSTG…VWTYAENTCG (67 aa). 4 cysteine pairs are disulfide-bonded: Cys-33/Cys-84, Cys-37/Cys-58, Cys-44/Cys-65, and Cys-48/Cys-67. Cys-84 bears the Cysteine amide mark.

It belongs to the long (4 C-C) scorpion toxin superfamily. Sodium channel inhibitor family. Beta subfamily. Expressed by the venom gland.

Its subcellular location is the secreted. Functionally, binds voltage-independently at site-4 of sodium channels (Nav) and shift the voltage of activation toward more negative potentials thereby affecting sodium channel activation and promoting spontaneous and repetitive firing. The sequence is that of Neurotoxin LmNaTx1 from Lychas mucronatus (Chinese swimming scorpion).